A 443-amino-acid chain; its full sequence is MRRSPRSGSAASSHNHTPNFYSENSNSSHSATSGDSNGRRSAGPELGEPEGRRARGSSCGEPALSPGMPGGDTWAGSSRPKLAPRSHNGQTACGAATVRGGASEPSGSSVVLEEQLNLLPILDLRQEMPTPRVSKSFLSLLFQVLSMVLSLAVDGLVCVCREICSIRFLFTAVSLLSIFLAALWWGLLYLIPPLENEPTEMLTLSQYHHRVHSQGQQLQQLQAELNKLHKEVSSVRAAHSERVAKLVFQRLNEDFVRKPDYALSSVGASIDLEKTSSDYEDQNTAYFWNRLSFWNYARPPSVILEPDVFPGNCWAFEGDKGQVVIRLPGHVQLSDITLQHPPPTVAHTGGASSAPRDFAVYGLQADDETEVFLGKFIFDVQKSEIQTFHLQNDPPSAFPKVKIQILSNWGHPRFTCLYRVRAHGVRTSEWADDNATGVTGGPH.

A compositionally biased stretch (low complexity) spans 1-36 (MRRSPRSGSAASSHNHTPNFYSENSNSSHSATSGDS). The disordered stretch occupies residues 1–107 (MRRSPRSGSA…VRGGASEPSG (107 aa)). 2 helical membrane passes run 137–157 (FLSLLFQVLSMVLSLAVDGLV) and 168–188 (FLFTAVSLLSIFLAALWWGLL). Residues 203-244 (TLSQYHHRVHSQGQQLQQLQAELNKLHKEVSSVRAAHSERVA) adopt a coiled-coil conformation. Residues 267-427 (GASIDLEKTS…YRVRAHGVRT (161 aa)) enclose the SUN domain.

Self-associates. Interacts with ODF1. May associate with microtubules. Interacts with SUN3 and SYNE1; suggesting the formation of a spermatogenesis-specific LINC complex; a SUN domain-based heterotrimer of SPAG4 and SUN3 may associate with SYNE1. Interacts with SEPT12 and LMNB1; during spermatogenesis. Isoform 1 is testis specific and is exclusively expressed in spermatids.

The protein resides in the membrane. It localises to the cytoplasm. It is found in the cytoskeleton. The protein localises to the nucleus envelope. Its subcellular location is the nucleus inner membrane. The protein resides in the flagellum axoneme. Its function is as follows. Involved in spermatogenesis. Required for sperm head formation but not required to establish and maintain general polarity of the sperm head. Required for anchoring and organization of the manchette. Required for targeting of SUN3 and probably SYNE1 through a probable SUN1:SYNE3 LINC complex to the nuclear envelope and involved in accurate posterior sperm head localization of the complex. May anchor SUN3 the nuclear envelope. Involved in maintenance of the nuclear envelope integrity. May assist the organization and assembly of outer dense fibers (ODFs), a specific structure of the sperm tail. The sequence is that of Sperm-associated antigen 4 protein (Spag4) from Mus musculus (Mouse).